The primary structure comprises 427 residues: Glutamate-1-semialdehyde 2,1-aminomutase (427 aa).

Lys268 carries the N6-(pyridoxal phosphate)lysine modification.

The protein belongs to the class-III pyridoxal-phosphate-dependent aminotransferase family. HemL subfamily. Pyridoxal 5'-phosphate is required as a cofactor.

It localises to the cytoplasm. The enzyme catalyses (S)-4-amino-5-oxopentanoate = 5-aminolevulinate. It participates in porphyrin-containing compound metabolism; protoporphyrin-IX biosynthesis; 5-aminolevulinate from L-glutamyl-tRNA(Glu): step 2/2. The polypeptide is Glutamate-1-semialdehyde 2,1-aminomutase (Methanococcus vannielii (strain ATCC 35089 / DSM 1224 / JCM 13029 / OCM 148 / SB)).